A 256-amino-acid chain; its full sequence is Geranylgeranylglyceryl phosphate synthase (256 aa).

Positions 28 and 53 each coordinate Mg(2+). Residues 172–178, 203–204, and 225–226 contribute to the sn-glycerol 1-phosphate site; these read YLEAGSG, GG, and GT.

It belongs to the GGGP/HepGP synthase family. Group II subfamily. Requires Mg(2+) as cofactor.

It localises to the cytoplasm. The enzyme catalyses sn-glycerol 1-phosphate + (2E,6E,10E)-geranylgeranyl diphosphate = sn-3-O-(geranylgeranyl)glycerol 1-phosphate + diphosphate. It participates in membrane lipid metabolism; glycerophospholipid metabolism. In terms of biological role, prenyltransferase that catalyzes the transfer of the geranylgeranyl moiety of geranylgeranyl diphosphate (GGPP) to the C3 hydroxyl of sn-glycerol-1-phosphate (G1P). This reaction is the first ether-bond-formation step in the biosynthesis of archaeal membrane lipids. In Methanococcus maripaludis (strain DSM 14266 / JCM 13030 / NBRC 101832 / S2 / LL), this protein is Geranylgeranylglyceryl phosphate synthase.